The primary structure comprises 545 residues: CTP synthase (545 aa).

The tract at residues 1 to 265 (MNGIKHIFIT…DKFVIKHLDL (265 aa)) is amidoligase domain. Ser-15 is a CTP binding site. Ser-15 contacts UTP. Residues 16–21 (SIGKGL) and Asp-73 contribute to the ATP site. Mg(2+)-binding residues include Asp-73 and Glu-141. CTP contacts are provided by residues 148–150 (DIE), 188–193 (KTKPTQ), and Lys-224. Residues 188 to 193 (KTKPTQ) and Lys-224 contribute to the UTP site. The Glutamine amidotransferase type-1 domain maps to 290-534 (EIAIIGKYTG…VAAALARKEI (245 aa)). Gly-349 serves as a coordination point for L-glutamine. Cys-376 acts as the Nucleophile; for glutamine hydrolysis in catalysis. Residues 377–380 (LGMQ), Glu-400, and Arg-460 each bind L-glutamine. Residues His-507 and Glu-509 contribute to the active site.

Belongs to the CTP synthase family. As to quaternary structure, homotetramer.

The enzyme catalyses UTP + L-glutamine + ATP + H2O = CTP + L-glutamate + ADP + phosphate + 2 H(+). The catalysed reaction is L-glutamine + H2O = L-glutamate + NH4(+). It catalyses the reaction UTP + NH4(+) + ATP = CTP + ADP + phosphate + 2 H(+). Its pathway is pyrimidine metabolism; CTP biosynthesis via de novo pathway; CTP from UDP: step 2/2. With respect to regulation, allosterically activated by GTP, when glutamine is the substrate; GTP has no effect on the reaction when ammonia is the substrate. The allosteric effector GTP functions by stabilizing the protein conformation that binds the tetrahedral intermediate(s) formed during glutamine hydrolysis. Inhibited by the product CTP, via allosteric rather than competitive inhibition. In terms of biological role, catalyzes the ATP-dependent amination of UTP to CTP with either L-glutamine or ammonia as the source of nitrogen. Regulates intracellular CTP levels through interactions with the four ribonucleotide triphosphates. The protein is CTP synthase of Tropheryma whipplei (strain TW08/27) (Whipple's bacillus).